A 1765-amino-acid chain; its full sequence is Sodium channel protein type 11 subunit alpha (1765 aa).

At Met-1–Ser-126 the chain is on the cytoplasmic side. One copy of the I repeat lies at Phe-115–Arg-403. Residues Val-127–Asn-148 traverse the membrane as a helical segment. The Extracellular segment spans residues Ser-149 to Asp-157. Residues Ile-158 to Ala-177 form a helical membrane-spanning segment. Topologically, residues Arg-178–Arg-189 are cytoplasmic. Residues Asp-190–Pro-209 form a helical membrane-spanning segment. The Extracellular portion of the chain corresponds to Gly-210–Ser-216. N-linked (GlcNAc...) asparagine glycosylation occurs at Asn-214. The chain crosses the membrane as a helical; Voltage-sensor span at residues Ala-217 to Leu-236. Topologically, residues Lys-237 to Asp-252 are cytoplasmic. A helical membrane pass occupies residues Val-253 to Leu-266. Residues Val-267–Asn-339 lie on the Extracellular side of the membrane. Cys-280 and Cys-317 are oxidised to a cystine. Residues Asn-319 and Asn-333 are each glycosylated (N-linked (GlcNAc...) asparagine). Residues Phe-340 to Leu-364 constitute an intramembrane region (pore-forming). The Extracellular portion of the chain corresponds to Arg-365–Phe-371. A helical transmembrane segment spans residues Val-372 to Ala-397. The Cytoplasmic segment spans residues Tyr-398–Thr-567. The stretch at Cys-554–Gln-820 is one II repeat. The chain crosses the membrane as a helical span at residues Ile-568–Val-591. The Extracellular portion of the chain corresponds to Glu-592–Thr-602. The helical transmembrane segment at Ile-603 to Leu-626 threads the bilayer. The Cytoplasmic segment spans residues Asp-627–His-634. Residues Gly-635–Leu-656 traverse the membrane as a helical segment. At Ser-657–Ser-662 the chain is on the extracellular side. The N-linked (GlcNAc...) asparagine glycan is linked to Asn-660. The chain crosses the membrane as a helical; Voltage-sensor span at residues Phe-663–Leu-682. Over Asn-683–Gly-697 the chain is Cytoplasmic. The chain crosses the membrane as a helical span at residues Asn-698–Thr-720. Residues Lys-721–Asn-741 lie on the Extracellular side of the membrane. An N-linked (GlcNAc...) asparagine glycan is attached at Asn-723. Positions Phe-742 to Trp-762 form an intramembrane region, pore-forming. Residues Gly-763–Pro-772 are Extracellular-facing. Cys-764 and Cys-774 are disulfide-bonded. Residues Leu-773–Leu-798 form a helical membrane-spanning segment. Residues Asn-799–Gln-1029 are Cytoplasmic-facing. The III repeat unit spans residues Asn-1022–Leu-1319. A helical membrane pass occupies residues Ile-1030–Ile-1052. The Extracellular portion of the chain corresponds to Phe-1053–Lys-1066. A helical transmembrane segment spans residues Leu-1067 to Phe-1092. Topologically, residues Arg-1093–Ser-1098 are cytoplasmic. The chain crosses the membrane as a helical span at residues Ala-1099 to Met-1116. Residue Asn-1117 is a topological domain, extracellular. Residues Leu-1118–Phe-1139 form a helical; Voltage-sensor membrane-spanning segment. Residues Glu-1140 to Asn-1158 are Cytoplasmic-facing. The helical transmembrane segment at Val-1159–Gly-1180 threads the bilayer. At Lys-1181–Val-1223 the chain is on the extracellular side. 4 N-linked (GlcNAc...) asparagine glycosylation sites follow: Asn-1187, Asn-1202, Asn-1207, and Asn-1210. An intramembrane region (pore-forming) is located at residues Gly-1224 to Ala-1245. At Ala-1246–Asn-1261 the chain is on the extracellular side. A helical membrane pass occupies residues Leu-1262 to Ile-1288. Topologically, residues Asp-1289 to Asp-1341 are cytoplasmic. The IV repeat unit spans residues Ile-1328 to Gln-1619. The chain crosses the membrane as a helical span at residues Leu-1342 to Ala-1365. The Extracellular portion of the chain corresponds to Glu-1366–Lys-1376. A helical transmembrane segment spans residues Thr-1377–Leu-1400. Topologically, residues Arg-1401–Thr-1406 are cytoplasmic. A helical membrane pass occupies residues Asn-1407–Glu-1430. Over Asp-1431–Leu-1440 the chain is Extracellular. The helical; Voltage-sensor transmembrane segment at Phe-1441 to Arg-1463 threads the bilayer. Over Thr-1464–Asn-1478 the chain is Cytoplasmic. A helical transmembrane segment spans residues Ile-1479–Val-1501. At Lys-1502–Thr-1515 the chain is on the extracellular side. An intramembrane region (pore-forming) is located at residues Phe-1516–Pro-1538. The Extracellular portion of the chain corresponds to Met-1539–Ile-1559. Asn-1547 carries an N-linked (GlcNAc...) asparagine glycan. A helical membrane pass occupies residues Ala-1560 to Leu-1584. The Cytoplasmic portion of the chain corresponds to Glu-1585–Asp-1765.

This sequence belongs to the sodium channel (TC 1.A.1.10) family. Nav1.9/SCN11A subfamily. As to quaternary structure, the voltage-resistant sodium channel consists of an ion conducting pore forming alpha-subunit regulated by one or more auxiliary subunits SCN1B, SCN2B and SCN3B. In terms of tissue distribution, expressed (at protein level) in myenteric sensory neurons. Expressed in small sensory neurons of the dorsal root ganglia (C-fiber neurons) and trigeminal ganglia.

The protein localises to the cell membrane. The enzyme catalyses Na(+)(in) = Na(+)(out). With respect to regulation, activity is not sensitive to inhibition by tetrodotoxin. In terms of biological role, sodium channel mediating the voltage-dependent sodium ion permeability of excitable membranes. Assuming opened or closed conformations in response to the voltage difference across the membrane, the protein forms a sodium-selective channel through which sodium ions may pass in accordance with their electrochemical gradient. Involved in membrane depolarization during action potential in nociceptors which function as key relay stations for the electrical transmission of pain signals from the periphery to the central nervous system. Also involved in rapid BDNF-evoked neuronal depolarization. In Rattus norvegicus (Rat), this protein is Sodium channel protein type 11 subunit alpha.